The chain runs to 339 residues: DNA-directed RNA polymerase subunit alpha (339 aa).

The interval 1–233 is alpha N-terminal domain (alpha-NTD); sequence MVREEVAGST…DLFLPFLHAE (233 aa). The tract at residues 266–339 is alpha C-terminal domain (alpha-CTD); sequence GIPLNCIFID…MDLLKNKLSF (74 aa).

Belongs to the RNA polymerase alpha chain family. As to quaternary structure, in plastids the minimal PEP RNA polymerase catalytic core is composed of four subunits: alpha, beta, beta', and beta''. When a (nuclear-encoded) sigma factor is associated with the core the holoenzyme is formed, which can initiate transcription.

Its subcellular location is the plastid. It localises to the chloroplast. The catalysed reaction is RNA(n) + a ribonucleoside 5'-triphosphate = RNA(n+1) + diphosphate. DNA-dependent RNA polymerase catalyzes the transcription of DNA into RNA using the four ribonucleoside triphosphates as substrates. The chain is DNA-directed RNA polymerase subunit alpha from Agrostis stolonifera (Creeping bentgrass).